The following is a 347-amino-acid chain: Methylthioribose-1-phosphate isomerase (347 aa).

Substrate-binding positions include 45–47 (RGA), R88, and Q197. Residue D238 is the Proton donor of the active site. A substrate-binding site is contributed by 248 to 249 (NK).

This sequence belongs to the eIF-2B alpha/beta/delta subunits family. MtnA subfamily.

The catalysed reaction is 5-(methylsulfanyl)-alpha-D-ribose 1-phosphate = 5-(methylsulfanyl)-D-ribulose 1-phosphate. Its pathway is amino-acid biosynthesis; L-methionine biosynthesis via salvage pathway; L-methionine from S-methyl-5-thio-alpha-D-ribose 1-phosphate: step 1/6. Catalyzes the interconversion of methylthioribose-1-phosphate (MTR-1-P) into methylthioribulose-1-phosphate (MTRu-1-P). This chain is Methylthioribose-1-phosphate isomerase, found in Trichormus variabilis (strain ATCC 29413 / PCC 7937) (Anabaena variabilis).